The following is a 49-amino-acid chain: Large ribosomal subunit protein bL33B (49 aa).

The protein belongs to the bacterial ribosomal protein bL33 family.

The protein is Large ribosomal subunit protein bL33B (rpmG2) of Lactococcus lactis subsp. lactis (strain IL1403) (Streptococcus lactis).